Consider the following 149-residue polypeptide: Calmodulin (149 aa).

EF-hand domains lie at 8 to 43 (EQIAEFKEAFSLFDKDGDGTITTKELGTVMRSLGQN), 44 to 79 (PTEAELQDMINEVDADGNGTIDFPEFLTMMARKMKD), 81 to 116 (DSEEEILEAFKVFDKDGNGFISAAELRHIMTNLGEK), and 117 to 149 (LTDEEVDEMIREADIDGDGQINYEEFVKMMMSK). Ca(2+) is bound by residues D21, D23, D25, T27, E32, D57, D59, N61, T63, E68, D94, D96, N98, E105, D130, D132, D134, Q136, and E141.

This sequence belongs to the calmodulin family.

Calmodulin mediates the control of a large number of enzymes, ion channels and other proteins by Ca(2+). Among the enzymes to be stimulated by the calmodulin-Ca(2+) complex are a number of protein kinases and phosphatases. This chain is Calmodulin, found in Globisporangium splendens (Leaf rot fungus).